The primary structure comprises 536 residues: MPEGKATSSASNTGKNKGGAYQDRDKPAQIRYSNISAAKAVADAVRTSLGPKGMDKMIQDEKGDVTITNDGATILKQMQVLHPSAKMLVELSKAQDIEAGDGTTSVVVIAGALLDSCNRLLQRGIHPTIISESFQKAVDKGVEVLTAMSQPVQLGDRETLLNSATTSLCSKVVSQYSSLLAPMSVDAVMRVIDPATATSVDLHDIKIIKKLGGTIDDCELVEGLVLTQRVANSSVSRVEKAKIGLIQFCLSPPKTDMDNQIVVSDYTQMDRVLREERAYILNMVKQIKKAGCNVLFIQKSILRDALSDLALHFLNKMKIMVVKDIEREDIEFICKTIGTKPIAHIDHFTPEMLGTAELAEEVSLDGSGKLVKITGCASPGKTVSIVVRGSNKLVIEEAERSIHDALCVIRCLVKKRALIAGGGAPEIELAVRLAEYSRTLGGMEAYCVRAYSDALEVIPSTLAENAGLNPISTVTELRNRHAQGDKMAGINVRKGGISNIMEELVVQPLLVSISALTLATETVRSILKIDDVVNAR.

Over residues 1–15 (MPEGKATSSASNTGK) the composition is skewed to polar residues. Residues 1–26 (MPEGKATSSASNTGKNKGGAYQDRDK) are disordered. Glycine 50 is a binding site for ADP. ATP is bound at residue glycine 50. Aspartate 101 provides a ligand contact to Mg(2+). Positions 102, 103, 104, 105, 170, 171, 422, and 507 each coordinate ADP. Residues glycine 102 and threonine 103 each coordinate ATP. Lysine 171 contacts ATP.

This sequence belongs to the TCP-1 chaperonin family. In terms of assembly, component of the chaperonin-containing T-complex (TRiC), a hexadecamer composed of two identical back-to-back stacked rings enclosing a protein folding chamber. Each ring is made up of eight different subunits: TCP1/CCT1, CCT2, CCT3, CCT4, CCT5, CCT6A/CCT6, CCT7, CCT8.

Its subcellular location is the cytoplasm. The catalysed reaction is ATP + H2O = ADP + phosphate + H(+). Its function is as follows. Component of the chaperonin-containing T-complex (TRiC), a molecular chaperone complex that assists the folding of actin, tubulin and other proteins upon ATP hydrolysis. This chain is T-complex protein 1 subunit delta (cct4), found in Takifugu rubripes (Japanese pufferfish).